Here is a 465-residue protein sequence, read N- to C-terminus: Chromosomal replication initiator protein DnaA (465 aa).

The segment at 1–84 is domain I, interacts with DnaA modulators; that stretch reads MSLSLWQQCL…RFEVGSKPLV (84 aa). A domain II region spans residues 84–128; sequence VQTISQPAQSHHNPVSVARQQPVRMAPVRPSWDNSPVQAEHTYRS. The domain III, AAA+ region stretch occupies residues 129-345; sequence NVNPKHTFDN…GALNRVIANA (217 aa). ATP contacts are provided by Gly173, Gly175, Lys176, and Thr177. Positions 346–465 are domain IV, binds dsDNA; sequence NFTGRSITID…FSNLIRTLSS (120 aa).

The protein belongs to the DnaA family. As to quaternary structure, oligomerizes as a right-handed, spiral filament on DNA at oriC.

Its subcellular location is the cytoplasm. In terms of biological role, plays an essential role in the initiation and regulation of chromosomal replication. ATP-DnaA binds to the origin of replication (oriC) to initiate formation of the DNA replication initiation complex once per cell cycle. Binds the DnaA box (a 9 base pair repeat at the origin) and separates the double-stranded (ds)DNA. Forms a right-handed helical filament on oriC DNA; dsDNA binds to the exterior of the filament while single-stranded (ss)DNA is stabiized in the filament's interior. The ATP-DnaA-oriC complex binds and stabilizes one strand of the AT-rich DNA unwinding element (DUE), permitting loading of DNA polymerase. After initiation quickly degrades to an ADP-DnaA complex that is not apt for DNA replication. Binds acidic phospholipids. The chain is Chromosomal replication initiator protein DnaA from Pectobacterium atrosepticum (strain SCRI 1043 / ATCC BAA-672) (Erwinia carotovora subsp. atroseptica).